The chain runs to 295 residues: ATP synthase gamma chain (295 aa).

The protein belongs to the ATPase gamma chain family. As to quaternary structure, F-type ATPases have 2 components, CF(1) - the catalytic core - and CF(0) - the membrane proton channel. CF(1) has five subunits: alpha(3), beta(3), gamma(1), delta(1), epsilon(1). CF(0) has three main subunits: a, b and c.

It localises to the cell membrane. Its function is as follows. Produces ATP from ADP in the presence of a proton gradient across the membrane. The gamma chain is believed to be important in regulating ATPase activity and the flow of protons through the CF(0) complex. The sequence is that of ATP synthase gamma chain from Herpetosiphon aurantiacus (strain ATCC 23779 / DSM 785 / 114-95).